We begin with the raw amino-acid sequence, 726 residues long: Dipeptidyl-peptidase 5 (726 aa).

A signal peptide spans M1 to A19. N96 and N252 each carry an N-linked (GlcNAc...) asparagine glycan. Residues A269–P291 form a disordered region. The Charge relay system role is filled by S558. A glycan (N-linked (GlcNAc...) asparagine) is linked at N605. Residues D641 and H673 each act as charge relay system in the active site. N-linked (GlcNAc...) asparagine glycosylation is present at N699.

This sequence belongs to the peptidase S9C family.

The protein localises to the secreted. Extracellular dipeptidyl-peptidase which removes N-terminal dipeptides sequentially from polypeptides having unsubstituted N-termini. Contributes to pathogenicity. The sequence is that of Dipeptidyl-peptidase 5 (DPP5) from Trichophyton tonsurans (Scalp ringworm fungus).